Reading from the N-terminus, the 554-residue chain is uncharacterized protein (554 aa).

5 consecutive transmembrane segments (helical) span residues Ser-13 to Leu-31, Ile-36 to Phe-58, Leu-73 to Phe-92, Leu-99 to Trp-121, and Ile-161 to Ile-183. RCK C-terminal domains follow at residues Lys-199–Lys-281 and Glu-282–Asn-366. 4 helical membrane passes run Ile-376–Ala-395, Leu-405–Gly-422, Ile-442–Val-464, and Gly-468–Ala-490.

Belongs to the AAE transporter (TC 2.A.81) family.

The protein resides in the cell membrane. This is an uncharacterized protein from Bacteroides thetaiotaomicron (strain ATCC 29148 / DSM 2079 / JCM 5827 / CCUG 10774 / NCTC 10582 / VPI-5482 / E50).